Reading from the N-terminus, the 218-residue chain is Probable transaldolase (218 aa).

Catalysis depends on lysine 84, which acts as the Schiff-base intermediate with substrate.

The protein belongs to the transaldolase family. Type 3B subfamily.

It is found in the cytoplasm. The enzyme catalyses D-sedoheptulose 7-phosphate + D-glyceraldehyde 3-phosphate = D-erythrose 4-phosphate + beta-D-fructose 6-phosphate. It participates in carbohydrate degradation; pentose phosphate pathway; D-glyceraldehyde 3-phosphate and beta-D-fructose 6-phosphate from D-ribose 5-phosphate and D-xylulose 5-phosphate (non-oxidative stage): step 2/3. Transaldolase is important for the balance of metabolites in the pentose-phosphate pathway. The protein is Probable transaldolase of Bartonella henselae (strain ATCC 49882 / DSM 28221 / CCUG 30454 / Houston 1) (Rochalimaea henselae).